The chain runs to 171 residues: MTIRFADKADCAAITEIYNHAVLHTAAIWNDRTVDTDNRLAWYEARQLLGYPVLVSEENGVVTGYASFGDWRSFDGFRYTVEHSVYVHPAHQGKGLGRKLLSRLIDEARRCGKHVMVAGIESQNAASIRLHHSLGFTVTAQMPQVGVKFGRWLDLTFMQLQLDEHAAPDAC.

The 163-residue stretch at 1–163 (MTIRFADKAD…DLTFMQLQLD (163 aa)) folds into the N-acetyltransferase domain. Substrate-binding positions include 72–74 (RSF) and 82–84 (EHS). Residues 85 to 87 (VYV), 93 to 98 (GKGLGR), asparagine 124, and serine 133 each bind acetyl-CoA.

As to quaternary structure, homodimer.

The enzyme catalyses L-methionine sulfoximine + acetyl-CoA = N-acetyl-L-methionine sulfoximine + CoA + H(+). It carries out the reaction L-methionine sulfone + acetyl-CoA = N-acetyl-L-methionine sulfone + CoA + H(+). In terms of biological role, plays a role in the resistance against the toxic effects of L-methionine sulfoximine (MSX), a rare amino acid which inhibits glutamine synthetase (GlnA). Catalyzes the acetylation of MSX. It can also use L-methionine sulfone (MSO). Also catalyzes the acylation of free L-amino acids using an acyl-CoA as acyl donor. The chain is L-methionine sulfoximine/L-methionine sulfone acetyltransferase (yncA) from Salmonella typhimurium (strain LT2 / SGSC1412 / ATCC 700720).